Here is a 255-residue protein sequence, read N- to C-terminus: tRNA (guanine-N(1)-)-methyltransferase (255 aa).

Residues glycine 113 and 133–138 (IGDYVL) contribute to the S-adenosyl-L-methionine site.

It belongs to the RNA methyltransferase TrmD family. Homodimer.

The protein resides in the cytoplasm. It catalyses the reaction guanosine(37) in tRNA + S-adenosyl-L-methionine = N(1)-methylguanosine(37) in tRNA + S-adenosyl-L-homocysteine + H(+). In terms of biological role, specifically methylates guanosine-37 in various tRNAs. In Serratia proteamaculans (strain 568), this protein is tRNA (guanine-N(1)-)-methyltransferase.